Reading from the N-terminus, the 145-residue chain is 5-hydroxymethyl-dUMP N-hydrolase (145 aa).

Residues G7, I9, R10, G11, S79, G81, E85, and S109 each coordinate 5-hydroxymethyl-dUMP.

The protein belongs to the 2'-deoxynucleoside 5'-phosphate N-hydrolase 1 family. Monomer and homodimer.

It is found in the cytoplasm. Its subcellular location is the nucleus. It carries out the reaction 5-hydroxymethyl-dUMP + H2O = 5-hydroxymethyluracil + 2-deoxy-D-ribose 5-phosphate. In terms of biological role, part of a nucleotide salvage pathway that eliminates epigenetically modified 5-hydroxymethyl-dCMP (hmdCMP) in a two-step process entailing deamination to cytotoxic 5-hydroxymethyl-dUMP (hmdUMP), followed by its hydrolysis into 5-hydroxymethyluracil (hmU) and 2-deoxy-D-ribose 5-phosphate (deoxyribosephosphate). Catalyzes the second step in that pathway, the hydrolysis of the N-glycosidic bond in hmdUMP, degrading this cytotoxic nucleotide to avoid its genomic integration. The protein is 5-hydroxymethyl-dUMP N-hydrolase of Esox lucius (Northern pike).